Reading from the N-terminus, the 72-residue chain is Prokaryotic ubiquitin-like protein Pup (72 aa).

A compositionally biased stretch (gly residues) spans 1 to 10 (MATKDTGGGQ). The tract at residues 1–45 (MATKDTGGGQQKATRSTEEVEEQAQDAQASEDLAERQEKLSDDVD) is disordered. Residues 10-60 (QQKATRSTEEVEEQAQDAQASEDLAERQEKLSDDVDSVLDEIDDVLEENAE) adopt a coiled-coil conformation. The segment at 28 to 66 (QASEDLAERQEKLSDDVDSVLDEIDDVLEENAEDFVRSF) is ARC ATPase binding. The segment covering 33 to 42 (LAERQEKLSD) has biased composition (basic and acidic residues). Q72 is modified (deamidated glutamine). An Isoglutamyl lysine isopeptide (Gln-Lys) (interchain with K-? in acceptor proteins) cross-link involves residue Q72.

The protein belongs to the prokaryotic ubiquitin-like protein family. As to quaternary structure, strongly interacts with the proteasome-associated ATPase ARC through a hydrophobic interface; the interacting region of Pup lies in its C-terminal half. There is one Pup binding site per ARC hexamer ring. Is modified by deamidation of its C-terminal glutamine to glutamate by the deamidase Dop, a prerequisite to the subsequent pupylation process.

The protein operates within protein degradation; proteasomal Pup-dependent pathway. In terms of biological role, protein modifier that is covalently attached to lysine residues of substrate proteins, thereby targeting them for proteasomal degradation. The tagging system is termed pupylation. The polypeptide is Prokaryotic ubiquitin-like protein Pup (Streptomyces griseus subsp. griseus (strain JCM 4626 / CBS 651.72 / NBRC 13350 / KCC S-0626 / ISP 5235)).